The following is a 152-amino-acid chain: Acidic phospholipase A2 (152 aa).

A signal peptide spans M1–S21. Residues I22–L27 constitute a propeptide that is removed on maturation. Cystine bridges form between C38–C104, C54–C151, C56–C72, C71–C132, C78–C125, C88–C118, and C111–C123. Ca(2+) contacts are provided by Y55, G57, and G59. The active site involves H75. D76 is a binding site for Ca(2+). The active site involves D126.

The protein belongs to the phospholipase A2 family. Group I subfamily. D49 sub-subfamily. Requires Ca(2+) as cofactor. As to expression, expressed by the venom gland.

The protein localises to the secreted. It catalyses the reaction a 1,2-diacyl-sn-glycero-3-phosphocholine + H2O = a 1-acyl-sn-glycero-3-phosphocholine + a fatty acid + H(+). Functionally, PLA2 catalyzes the calcium-dependent hydrolysis of the 2-acyl groups in 3-sn-phosphoglycerides. This Ophiophagus hannah (King cobra) protein is Acidic phospholipase A2.